Reading from the N-terminus, the 449-residue chain is Interferon-related developmental regulator 1 (449 aa).

A compositionally biased stretch (basic residues) spans 1–10 (MPKNKKRNAP). The disordered stretch occupies residues 1–42 (MPKNKKRNAPHRGGGGGGGSGAATSAATAGGPHRTVQPFSDE). The span at 12–21 (RGGGGGGGSG) shows a compositional bias: gly residues. Residues 22–31 (AATSAATAGG) are compositionally biased toward low complexity.

This sequence belongs to the IFRD family. As to quaternary structure, interacts with PSIP1/LEDGF.

Could play a role in regulating gene activity in the proliferative and/or differentiative pathways induced by NGF. May be an autocrine factor that attenuates or amplifies the initial ligand-induced signal. This Mus musculus (Mouse) protein is Interferon-related developmental regulator 1 (Ifrd1).